Consider the following 545-residue polypeptide: MAAKEIKFGRTAREKMLRGVDILADAVKVTLGPKGRNVIIDKSFGAPRITKDGVSVAKEIELEDKFENMGAQMVREVASKTNDIAGDGTTTATVLAQAIVREGAKAVAAGMNPMDLKRGIDLAVAEVVKDLQAKAKKINTSEEVAQVGTISANGERQVGLDIAEAMQKVGNEGVITVEEAKTAETELEVVEGMQFDRGYLSPYFVTNPEKMIADLEDVFILLHEKKLSNLQSMLPVLEAVVQTGKPLLIIAEDVEGEALATLVVNKLRGGLKIAAVKAPGFGDRRKAMLEDIAILTGGTVISEDLGIKLESVTLDMLGRAKKVSISKENTTIVDGSGAKSDIEGRVAQIKAQIEETTSDYDREKLQERLAKLAGGVAVIRVGGSTEVEVKEKKDRIDDALNATRAAVQEGIVPGGGVALLRSSVKISAKGVNDDQEAGINIVRRALQAPARQIAENAGDEASIVVGKILDKDQDNYGYNAQTGEYGDMIGMGIIDPVKVVRTALQDAASVASLLITTEAMIAELPKKDAPAMPGGMGGMGGMDMM.

Residues 30-33 (TLGP), Lys-51, 87-91 (DGTTT), Gly-415, and Asp-495 each bind ATP.

Belongs to the chaperonin (HSP60) family. In terms of assembly, forms a cylinder of 14 subunits composed of two heptameric rings stacked back-to-back. Interacts with the co-chaperonin GroES.

It is found in the cytoplasm. It catalyses the reaction ATP + H2O + a folded polypeptide = ADP + phosphate + an unfolded polypeptide.. In terms of biological role, together with its co-chaperonin GroES, plays an essential role in assisting protein folding. The GroEL-GroES system forms a nano-cage that allows encapsulation of the non-native substrate proteins and provides a physical environment optimized to promote and accelerate protein folding. The sequence is that of Chaperonin GroEL 1 from Rhizobium etli (strain ATCC 51251 / DSM 11541 / JCM 21823 / NBRC 15573 / CFN 42).